The chain runs to 74 residues: Exodeoxyribonuclease 7 small subunit (74 aa).

This sequence belongs to the XseB family. In terms of assembly, heterooligomer composed of large and small subunits.

The protein localises to the cytoplasm. The catalysed reaction is Exonucleolytic cleavage in either 5'- to 3'- or 3'- to 5'-direction to yield nucleoside 5'-phosphates.. Bidirectionally degrades single-stranded DNA into large acid-insoluble oligonucleotides, which are then degraded further into small acid-soluble oligonucleotides. The polypeptide is Exodeoxyribonuclease 7 small subunit (Neisseria meningitidis serogroup C / serotype 2a (strain ATCC 700532 / DSM 15464 / FAM18)).